A 230-amino-acid chain; its full sequence is Large ribosomal subunit protein uL1 (230 aa).

It belongs to the universal ribosomal protein uL1 family. Part of the 50S ribosomal subunit.

Functionally, binds directly to 23S rRNA. The L1 stalk is quite mobile in the ribosome, and is involved in E site tRNA release. Its function is as follows. Protein L1 is also a translational repressor protein, it controls the translation of the L11 operon by binding to its mRNA. This chain is Large ribosomal subunit protein uL1, found in Onion yellows phytoplasma (strain OY-M).